We begin with the raw amino-acid sequence, 230 residues long: Cytidylate kinase (230 aa).

10–18 (GFSSTGKST) contacts ATP.

Belongs to the cytidylate kinase family. Type 1 subfamily.

It is found in the cytoplasm. It catalyses the reaction CMP + ATP = CDP + ADP. The enzyme catalyses dCMP + ATP = dCDP + ADP. The polypeptide is Cytidylate kinase (Flavobacterium johnsoniae (strain ATCC 17061 / DSM 2064 / JCM 8514 / BCRC 14874 / CCUG 350202 / NBRC 14942 / NCIMB 11054 / UW101) (Cytophaga johnsonae)).